The following is an 874-amino-acid chain: Alanine--tRNA ligase (874 aa).

Residues His-563, His-567, Cys-665, and His-669 each coordinate Zn(2+).

Belongs to the class-II aminoacyl-tRNA synthetase family. Requires Zn(2+) as cofactor.

The protein resides in the cytoplasm. It catalyses the reaction tRNA(Ala) + L-alanine + ATP = L-alanyl-tRNA(Ala) + AMP + diphosphate. Functionally, catalyzes the attachment of alanine to tRNA(Ala) in a two-step reaction: alanine is first activated by ATP to form Ala-AMP and then transferred to the acceptor end of tRNA(Ala). Also edits incorrectly charged Ser-tRNA(Ala) and Gly-tRNA(Ala) via its editing domain. The sequence is that of Alanine--tRNA ligase from Histophilus somni (strain 2336) (Haemophilus somnus).